The following is a 252-amino-acid chain: Ubiquinone biosynthesis protein COQ4 homolog 2, mitochondrial (252 aa).

4 residues coordinate Zn(2+): histidine 130, aspartate 131, histidine 134, and glutamate 146.

This sequence belongs to the COQ4 family. As to quaternary structure, component of a multi-subunit COQ enzyme complex. The cofactor is Zn(2+).

It is found in the mitochondrion inner membrane. It catalyses the reaction a 4-hydroxy-3-methoxy-5-(all-trans-polyprenyl)benzoate + H(+) = a 2-methoxy-6-(all-trans-polyprenyl)phenol + CO2. It participates in cofactor biosynthesis; ubiquinone biosynthesis. Functionally, lyase that catalyzes the C1-decarboxylation of 4-hydroxy-3-methoxy-5-(all-trans-polyprenyl)benzoic acid into 2-methoxy-6-(all-trans-polyprenyl)phenol during ubiquinone biosynthesis. The chain is Ubiquinone biosynthesis protein COQ4 homolog 2, mitochondrial from Trypanosoma cruzi (strain CL Brener).